The following is a 629-amino-acid chain: tRNA uridine 5-carboxymethylaminomethyl modification enzyme MnmG (629 aa).

13-18 (GGGHAG) contacts FAD. Position 273-287 (273-287 (GPRYCPSIEDKIHRF)) interacts with NAD(+).

Belongs to the MnmG family. As to quaternary structure, homodimer. Heterotetramer of two MnmE and two MnmG subunits. It depends on FAD as a cofactor.

It is found in the cytoplasm. NAD-binding protein involved in the addition of a carboxymethylaminomethyl (cmnm) group at the wobble position (U34) of certain tRNAs, forming tRNA-cmnm(5)s(2)U34. The sequence is that of tRNA uridine 5-carboxymethylaminomethyl modification enzyme MnmG from Shewanella baltica (strain OS195).